Here is a 620-residue protein sequence, read N- to C-terminus: Chaperone protein HscA homolog (620 aa).

This sequence belongs to the heat shock protein 70 family.

In terms of biological role, chaperone involved in the maturation of iron-sulfur cluster-containing proteins. Has a low intrinsic ATPase activity which is markedly stimulated by HscB. The protein is Chaperone protein HscA homolog of Herminiimonas arsenicoxydans.